Consider the following 118-residue polypeptide: MRIKFSVARHARKKKVLKRASGYYGDKSRRLRMATQQVDKSLVHAYTGRKDKKHQYRQLWITRINAAVREEGLNYSNFINGLAKSNITLNRKMLSEMAIQDPLSFKKLVDVAKQAIAK.

Belongs to the bacterial ribosomal protein bL20 family.

Binds directly to 23S ribosomal RNA and is necessary for the in vitro assembly process of the 50S ribosomal subunit. It is not involved in the protein synthesizing functions of that subunit. In Elusimicrobium minutum (strain Pei191), this protein is Large ribosomal subunit protein bL20.